Consider the following 164-residue polypeptide: Pyruvoyl-dependent arginine decarboxylase (164 aa).

Ser52 bears the Pyruvic acid (Ser) mark.

Belongs to the PdaD family. Pyruvate serves as cofactor.

The catalysed reaction is L-arginine + H(+) = agmatine + CO2. In Methanococcus maripaludis (strain C7 / ATCC BAA-1331), this protein is Pyruvoyl-dependent arginine decarboxylase.